We begin with the raw amino-acid sequence, 358 residues long: Aerobic magnesium-protoporphyrin IX monomethyl ester [oxidative] cyclase (358 aa).

It belongs to the AcsF family. Fe cation serves as cofactor.

It carries out the reaction Mg-protoporphyrin IX 13-monomethyl ester + 3 NADPH + 3 O2 + 2 H(+) = 3,8-divinyl protochlorophyllide a + 3 NADP(+) + 5 H2O. It participates in porphyrin-containing compound metabolism; chlorophyll biosynthesis. Functionally, catalyzes the formation of the isocyclic ring in chlorophyll biosynthesis in aerobic conditions. Mediates the cyclase reaction, which results in the formation of divinylprotochlorophyllide (Pchlide) characteristic of all chlorophylls from magnesium-protoporphyrin IX 13-monomethyl ester (MgPMME). This chain is Aerobic magnesium-protoporphyrin IX monomethyl ester [oxidative] cyclase, found in Rubrivivax gelatinosus (Rhodocyclus gelatinosus).